A 196-amino-acid chain; its full sequence is Peroxynitrite isomerase (196 aa).

A GXWXGXG motif is present at residues 46 to 52 (GVWRGRG). Residue histidine 186 participates in heme b binding.

Belongs to the nitrobindin family. Homodimer. The cofactor is heme b.

It carries out the reaction peroxynitrite = nitrate. The protein operates within nitrogen metabolism. Functionally, heme-binding protein able to scavenge peroxynitrite and to protect free L-tyrosine against peroxynitrite-mediated nitration, by acting as a peroxynitrite isomerase that converts peroxynitrite to nitrate. Therefore, this protein likely plays a role in peroxynitrite sensing and in the detoxification of reactive nitrogen and oxygen species (RNS and ROS, respectively). Is able to bind nitric oxide (NO) in vitro, but may act as a sensor of peroxynitrite levels in vivo. The polypeptide is Peroxynitrite isomerase (Salinispora tropica (strain ATCC BAA-916 / DSM 44818 / JCM 13857 / NBRC 105044 / CNB-440)).